The sequence spans 728 residues: MSSQASQRSSSTSAVAQKTRERRKSKSRRRCWFGCLWLSSRVSLIRSSSRFSRSPEPDESLTAIDKVMSIINEKPLKMAHILKTARFVNDVSFSERKQFVECGVIHHLLELIGETAISDFSASSRSADEQKRRARRNSSASLSHKGTGYGTGSTRSRWDIERTVEEKLIREEHLTWLLSILNSFMLGWPTTDNLKTKPEELVHMTEIAIKLIADSSVLSILEYNLRNDSFFDVSEHIEIYQALLETAASMAATPGLVPFLVRPYTSSAKSIAKELIPRFKENILSIQARWGGTLEETNFRMAEFTAKVTLLSDYVINAARAYEQTLPPEQRIQTATHRRPSHSGLHSKMQGPKDDETIYKNKMQELQLQTAKFIGDFGKLCVPYVFRKEAKNINPFSPHLRDRTKRIAKELASIANALPLNASNSIYVCYDEGRVDIIKVLISGPDDTPYANGLFEFDIFFPTGYPFSPPKCAFLTTGSGNVRFNPNLYNDGKICLSILGTWEGRPEEKWNPYCSLMQVLVSIQGLIFVKDPYFNEPGFERYQGTDRGDEYSRKYNLQIEHATLNYAIREQLKKPSEHFKEVIEKHLWLKREAILKQAQAWIDNVSNDFGDDKMSKRKDVFAFETGFNPATQERVIHNLIQELQAMQSPFAKEEAEESERLKREQSEKEEKQKKEAAALAEIEREKRELELDFQRRRSSVLATHVAVIRTQPTGDYSVPSVNEPSTSS.

A compositionally biased stretch (low complexity) spans 1–17 (MSSQASQRSSSTSAVAQ). Disordered stretches follow at residues 1-23 (MSSQ…RERR) and 123-155 (SSRS…GSTR). In terms of domain architecture, UBC core spans 402–568 (DRTKRIAKEL…IEHATLNYAI (167 aa)). Cys-495 acts as the Glycyl thioester intermediate in catalysis. 2 disordered regions span residues 649 to 678 (PFAK…EAAA) and 709 to 728 (RTQP…STSS). The segment covering 658-678 (SERLKREQSEKEEKQKKEAAA) has biased composition (basic and acidic residues). Residues 710–728 (TQPTGDYSVPSVNEPSTSS) are compositionally biased toward polar residues.

It belongs to the ubiquitin-conjugating enzyme family.

This chain is Probable ubiquitin-conjugating enzyme protein 17 (ubc-17), found in Caenorhabditis elegans.